The following is a 207-amino-acid chain: Ribonuclease HII (207 aa).

Residues 18–207 form the RNase H type-2 domain; that stretch reads TYLSGSDEAG…PIKKISKETS (190 aa). A divalent metal cation is bound by residues Asp-24, Glu-25, and Asp-116.

The protein belongs to the RNase HII family. It depends on Mn(2+) as a cofactor. The cofactor is Mg(2+).

It localises to the cytoplasm. The catalysed reaction is Endonucleolytic cleavage to 5'-phosphomonoester.. In terms of biological role, endonuclease that specifically degrades the RNA of RNA-DNA hybrids. In Mycoplasma capricolum subsp. capricolum (strain California kid / ATCC 27343 / NCTC 10154), this protein is Ribonuclease HII.